The primary structure comprises 277 residues: Formamidopyrimidine-DNA glycosylase (277 aa).

The active-site Schiff-base intermediate with DNA is Pro2. The active-site Proton donor is the Glu3. Residue Lys58 is the Proton donor; for beta-elimination activity of the active site. The DNA site is built by His97, Arg116, and Arg158. An FPG-type zinc finger spans residues Asn243–Arg277. Residue Arg267 is the Proton donor; for delta-elimination activity of the active site.

It belongs to the FPG family. In terms of assembly, monomer. It depends on Zn(2+) as a cofactor.

The catalysed reaction is Hydrolysis of DNA containing ring-opened 7-methylguanine residues, releasing 2,6-diamino-4-hydroxy-5-(N-methyl)formamidopyrimidine.. The enzyme catalyses 2'-deoxyribonucleotide-(2'-deoxyribose 5'-phosphate)-2'-deoxyribonucleotide-DNA = a 3'-end 2'-deoxyribonucleotide-(2,3-dehydro-2,3-deoxyribose 5'-phosphate)-DNA + a 5'-end 5'-phospho-2'-deoxyribonucleoside-DNA + H(+). In terms of biological role, involved in base excision repair of DNA damaged by oxidation or by mutagenic agents. Acts as a DNA glycosylase that recognizes and removes damaged bases. Has a preference for oxidized purines, such as 7,8-dihydro-8-oxoguanine (8-oxoG). Has AP (apurinic/apyrimidinic) lyase activity and introduces nicks in the DNA strand. Cleaves the DNA backbone by beta-delta elimination to generate a single-strand break at the site of the removed base with both 3'- and 5'-phosphates. This is Formamidopyrimidine-DNA glycosylase from Alkalilimnicola ehrlichii (strain ATCC BAA-1101 / DSM 17681 / MLHE-1).